A 522-amino-acid chain; its full sequence is Echinocystic acid 23-monooxygenase (522 aa).

A helical; Signal-anchor for type II membrane protein membrane pass occupies residues 4–24; that stretch reads LPYIATSIACIVILRWALNMM. Asn190 carries an N-linked (GlcNAc...) asparagine glycan. Cys470 provides a ligand contact to heme.

This sequence belongs to the cytochrome P450 family. Requires heme as cofactor. As to expression, mainly expressed in flowers and flower buds, to a lesser extent in young leaves and, at low levels, in old leaves, stems and roots.

The protein localises to the membrane. The protein operates within secondary metabolite biosynthesis; terpenoid biosynthesis. Functionally, component of the oleanane-type triterpene saponins (e.g. saponarioside A and saponarioside B) biosynthetic pathway, leading to the production of natural products with detergent properties used as traditional sources of soap. An oxidoreductase that facilitates the oxidation of the methyl group to a carboxyl group at the C-23 position of echinocystic acid, resulting in the formation of quillaic acid (QA). The polypeptide is Echinocystic acid 23-monooxygenase (Saponaria officinalis (Common soapwort)).